Reading from the N-terminus, the 306-residue chain is UDP-3-O-acyl-N-acetylglucosamine deacetylase (306 aa).

The Zn(2+) site is built by histidine 79, histidine 238, and aspartate 242. The active-site Proton donor is the histidine 265.

Belongs to the LpxC family. Zn(2+) serves as cofactor.

It catalyses the reaction a UDP-3-O-[(3R)-3-hydroxyacyl]-N-acetyl-alpha-D-glucosamine + H2O = a UDP-3-O-[(3R)-3-hydroxyacyl]-alpha-D-glucosamine + acetate. The protein operates within glycolipid biosynthesis; lipid IV(A) biosynthesis; lipid IV(A) from (3R)-3-hydroxytetradecanoyl-[acyl-carrier-protein] and UDP-N-acetyl-alpha-D-glucosamine: step 2/6. Functionally, catalyzes the hydrolysis of UDP-3-O-myristoyl-N-acetylglucosamine to form UDP-3-O-myristoylglucosamine and acetate, the committed step in lipid A biosynthesis. This chain is UDP-3-O-acyl-N-acetylglucosamine deacetylase, found in Yersinia pseudotuberculosis serotype O:1b (strain IP 31758).